Consider the following 375-residue polypeptide: Growth/differentiation factor 8 (375 aa).

The signal sequence occupies residues 1 to 23; sequence MQKLQLCVYIYLFMLIVAGPVDL. The propeptide occupies 24-266; that stretch reads NENSEQKENV…VTDTPKRSRR (243 aa). An N-linked (GlcNAc...) asparagine glycan is attached at asparagine 71. Cystine bridges form between cysteine 272/cysteine 282, cysteine 281/cysteine 340, cysteine 309/cysteine 372, and cysteine 313/cysteine 374.

The protein belongs to the TGF-beta family. In terms of assembly, homodimer; disulfide-linked. Interacts with WFIKKN2, leading to inhibit its activity. Interacts with FSTL3. In terms of processing, synthesized as large precursor molecule that undergoes proteolytic cleavage to generate an N-terminal propeptide and a disulfide linked C-terminal dimer, which is the biologically active molecule. The circulating form consists of a latent complex of the C-terminal dimer and other proteins, including its propeptide, which maintain the C-terminal dimer in a latent, inactive state. Ligand activation requires additional cleavage of the prodomain by a tolloid-like metalloproteinase.

The protein localises to the secreted. Acts specifically as a negative regulator of skeletal muscle growth. The chain is Growth/differentiation factor 8 (MSTN) from Pan paniscus (Pygmy chimpanzee).